A 457-amino-acid polypeptide reads, in one-letter code: Phosphomethylpyrimidine synthase (457 aa).

Substrate-binding positions include N80, M109, Y139, H175, 195-197 (SRG), 236-239 (DSLR), and E275. H279 is a Zn(2+) binding site. Substrate is bound at residue Y302. H343 is a binding site for Zn(2+). Residues C423, C426, and C431 each coordinate [4Fe-4S] cluster.

The protein belongs to the ThiC family. It depends on [4Fe-4S] cluster as a cofactor.

It catalyses the reaction 5-amino-1-(5-phospho-beta-D-ribosyl)imidazole + S-adenosyl-L-methionine = 4-amino-2-methyl-5-(phosphooxymethyl)pyrimidine + CO + 5'-deoxyadenosine + formate + L-methionine + 3 H(+). It participates in cofactor biosynthesis; thiamine diphosphate biosynthesis. Functionally, catalyzes the synthesis of the hydroxymethylpyrimidine phosphate (HMP-P) moiety of thiamine from aminoimidazole ribotide (AIR) in a radical S-adenosyl-L-methionine (SAM)-dependent reaction. This is Phosphomethylpyrimidine synthase from Nostoc sp. (strain PCC 7120 / SAG 25.82 / UTEX 2576).